Reading from the N-terminus, the 382-residue chain is tRNA(Ile)-lysidine synthase (382 aa).

50–55 is a binding site for ATP; sequence SGGRDS.

Belongs to the tRNA(Ile)-lysidine synthase family.

The protein resides in the cytoplasm. It carries out the reaction cytidine(34) in tRNA(Ile2) + L-lysine + ATP = lysidine(34) in tRNA(Ile2) + AMP + diphosphate + H(+). Functionally, ligates lysine onto the cytidine present at position 34 of the AUA codon-specific tRNA(Ile) that contains the anticodon CAU, in an ATP-dependent manner. Cytidine is converted to lysidine, thus changing the amino acid specificity of the tRNA from methionine to isoleucine. The polypeptide is tRNA(Ile)-lysidine synthase (Bifidobacterium animalis subsp. lactis (strain AD011)).